The chain runs to 328 residues: DNA-directed RNA polymerase subunit alpha (328 aa).

Residues 1–234 (MQGSVTEFLK…EQLDAFVDLR (234 aa)) are alpha N-terminal domain (alpha-NTD). The segment at 248–328 (FDPILLRPVD…NWPPASIAED (81 aa)) is alpha C-terminal domain (alpha-CTD).

This sequence belongs to the RNA polymerase alpha chain family. Homodimer. The RNAP catalytic core consists of 2 alpha, 1 beta, 1 beta' and 1 omega subunit. When a sigma factor is associated with the core the holoenzyme is formed, which can initiate transcription.

The catalysed reaction is RNA(n) + a ribonucleoside 5'-triphosphate = RNA(n+1) + diphosphate. Functionally, DNA-dependent RNA polymerase catalyzes the transcription of DNA into RNA using the four ribonucleoside triphosphates as substrates. The chain is DNA-directed RNA polymerase subunit alpha from Haemophilus influenzae (strain PittEE).